The sequence spans 88 residues: MEEFIIKIAGTKGISNFKSYHFSIISNYENFFNFILPKDVKDVLVVLPFDEEKTKTIKHAITNARSNVSVTIMYSGKIRDEMIIGWRT.

This is an uncharacterized protein from Sulfolobus islandicus filamentous virus (isolate Iceland/Hveragerdi) (SIFV).